The following is a 322-amino-acid chain: Cysteine protease YopT (322 aa).

The interval serine 43–aspartate 72 is disordered. Catalysis depends on residues cysteine 139, histidine 258, and aspartate 274.

It belongs to the peptidase C58 family. As to quaternary structure, interacts with human ARHA.

Its subcellular location is the secreted. Cysteine protease, which is translocated into infected cells and plays a central role in pathogenesis by cleaving the C-terminus end of the human small GTPase RhoA/ARHA, a regulator of cytoskeleton. Once cleaved, ARHA loses its lipid modification, and is released from the cell membrane, leading to the subsequent disruption of actin cytoskeleton of the host cell. The polypeptide is Cysteine protease YopT (yopT) (Yersinia enterocolitica).